The sequence spans 176 residues: Inner membrane-spanning protein YciB (176 aa).

Transmembrane regions (helical) follow at residues 3–23 (FLFDLFPIILFFVAFKVWGIF), 24–44 (TATAVAIVATLAQVAWVAFRH), 49–69 (TMLWVSLGVIVVFGGATLVLH), 72–92 (KFIQWKPTVLYWLFAIGLLAA), 121–141 (LAWALFFAVLGVANLYVVHNF), and 149–169 (FKLFGTTGAMVVFIILQSLWL).

Belongs to the YciB family.

The protein localises to the cell inner membrane. In terms of biological role, plays a role in cell envelope biogenesis, maintenance of cell envelope integrity and membrane homeostasis. The chain is Inner membrane-spanning protein YciB from Burkholderia cenocepacia (strain ATCC BAA-245 / DSM 16553 / LMG 16656 / NCTC 13227 / J2315 / CF5610) (Burkholderia cepacia (strain J2315)).